The following is a 202-amino-acid chain: AFG2-interacting ribosome maturation factor (202 aa).

In terms of assembly, part of the 55LCC heterohexameric ATPase complex. Does not associate with pre-60S ribosomal particles.

It localises to the nucleus. The protein localises to the cytoplasm. Its function is as follows. Part of the 55LCC heterohexameric ATPase complex which is chromatin-associated and promotes replisome proteostasis to maintain replication fork progression and genome stability. Required for replication fork progression, sister chromatid cohesion, and chromosome stability. The ATPase activity is specifically enhanced by replication fork DNA and is coupled to cysteine protease-dependent cleavage of replisome substrates in response to replication fork damage. Uses ATPase activity to process replisome substrates in S-phase, facilitating their proteolytic turnover from chromatin to ensure DNA replication and mitotic fidelity. Involved in the cytoplasmic maturation steps of pre-60S ribosomal particles by promoting the release of shuttling protein RSL24D1/RLP24 from the pre-ribosomal particles. Plays an essential role in early embryonic development. In Danio rerio (Zebrafish), this protein is AFG2-interacting ribosome maturation factor (airim).